The chain runs to 423 residues: MEKVDVLLGLQWGDEGKGKIVDVLTPHYDIVARFQGGPNAGHTLEFNGEKYVLRSIPSGIFQGEKTNVIGNGVVLDPLLFKEEAEALARSGHDLTKRLVISRKAHLIMPTHRLLDAANEMAKGSGKIGTTGKGIGPTYTDKVSRNGLRVGDLEHGFEEAYSVAKERHLRILNSLNYPTDKLADLEERWMEATKYLRKFEFVDSEFLINGALLSGKKVLAEGAQGSLLDIDFGSYPFVTSSNTICAGCCTGLGVAPRNVGDVYGIFKAYCTRVGAGPFPTELFDETGDKLCELGREFGSVTGRKRRCGWIDLVALRYTIMLNGVTKLIMMKSDVMDLFPTIKACVAYEIDGKETRNFPFHLTEGVTPVYKELPGWQQSMTNVVSEADFPKEFSDYIAFLEKELGVGIAIVSVGPDREQTIIRQA.

GTP is bound by residues 13-19 and 41-43; these read GDEGKGK and GHT. Catalysis depends on Asp14, which acts as the Proton acceptor. Positions 14 and 41 each coordinate Mg(2+). IMP is bound by residues 14–17, 39–42, Thr130, Arg144, Gln223, Thr238, and Arg302; these read DEGK and NAGH. Catalysis depends on His42, which acts as the Proton donor. 298–304 contacts substrate; it reads SVTGRKR. Residues Arg304 and 410-412 each bind GTP; that span reads SVG.

The protein belongs to the adenylosuccinate synthetase family. In terms of assembly, homodimer. Requires Mg(2+) as cofactor.

It is found in the cytoplasm. The enzyme catalyses IMP + L-aspartate + GTP = N(6)-(1,2-dicarboxyethyl)-AMP + GDP + phosphate + 2 H(+). It functions in the pathway purine metabolism; AMP biosynthesis via de novo pathway; AMP from IMP: step 1/2. Plays an important role in the de novo pathway of purine nucleotide biosynthesis. Catalyzes the first committed step in the biosynthesis of AMP from IMP. The chain is Adenylosuccinate synthetase from Porphyromonas gingivalis (strain ATCC BAA-308 / W83).